Consider the following 360-residue polypeptide: Peptide chain release factor 1 (360 aa).

Q235 bears the N5-methylglutamine mark. The interval 285 to 314 (KRQQAEASTRRNLLGSGDRSDRNRTYNFPQ) is disordered.

The protein belongs to the prokaryotic/mitochondrial release factor family. Post-translationally, methylated by PrmC. Methylation increases the termination efficiency of RF1.

It is found in the cytoplasm. Peptide chain release factor 1 directs the termination of translation in response to the peptide chain termination codons UAG and UAA. The polypeptide is Peptide chain release factor 1 (Klebsiella pneumoniae subsp. pneumoniae (strain ATCC 700721 / MGH 78578)).